Here is a 316-residue protein sequence, read N- to C-terminus: Ribosomal RNA small subunit methyltransferase H (316 aa).

S-adenosyl-L-methionine is bound by residues 35-37 (SGH), Asp-55, Phe-84, Asp-105, and Gln-112.

This sequence belongs to the methyltransferase superfamily. RsmH family.

Its subcellular location is the cytoplasm. It carries out the reaction cytidine(1402) in 16S rRNA + S-adenosyl-L-methionine = N(4)-methylcytidine(1402) in 16S rRNA + S-adenosyl-L-homocysteine + H(+). In terms of biological role, specifically methylates the N4 position of cytidine in position 1402 (C1402) of 16S rRNA. The protein is Ribosomal RNA small subunit methyltransferase H of Streptococcus pyogenes serotype M6 (strain ATCC BAA-946 / MGAS10394).